Reading from the N-terminus, the 211-residue chain is 3-demethoxyubiquinol 3-hydroxylase (211 aa).

Glu60, Glu90, His93, Glu142, Glu174, and His177 together coordinate Fe cation.

Belongs to the COQ7 family. It depends on Fe cation as a cofactor.

The protein localises to the cell membrane. It carries out the reaction a 5-methoxy-2-methyl-3-(all-trans-polyprenyl)benzene-1,4-diol + AH2 + O2 = a 3-demethylubiquinol + A + H2O. Its pathway is cofactor biosynthesis; ubiquinone biosynthesis. Catalyzes the hydroxylation of 2-nonaprenyl-3-methyl-6-methoxy-1,4-benzoquinol during ubiquinone biosynthesis. In Francisella tularensis subsp. holarctica (strain FTNF002-00 / FTA), this protein is 3-demethoxyubiquinol 3-hydroxylase.